A 478-amino-acid polypeptide reads, in one-letter code: ATP-dependent DNA helicase RecQ (478 aa).

The Helicase ATP-binding domain maps to 28-202 (IDCLLARRDC…VEGLNLRSPE (175 aa)). 41–48 (LPTGGGKS) provides a ligand contact to ATP. Positions 142–145 (DEAH) match the DEAH box motif. Positions 229-380 (QLRRFLLKHL…RAEVLSQQIP (152 aa)) constitute a Helicase C-terminal domain. C447, C467, C470, and C473 together coordinate Zn(2+).

Belongs to the helicase family. RecQ subfamily. It depends on Mg(2+) as a cofactor. Zn(2+) serves as cofactor.

It catalyses the reaction Couples ATP hydrolysis with the unwinding of duplex DNA by translocating in the 3'-5' direction.. The catalysed reaction is ATP + H2O = ADP + phosphate + H(+). An ATP-dependent DNA helicase which unwinds DNA in a 3'-5' direction. This chain is ATP-dependent DNA helicase RecQ, found in Synechocystis sp. (strain ATCC 27184 / PCC 6803 / Kazusa).